Here is a 273-residue protein sequence, read N- to C-terminus: 2,3,4,5-tetrahydropyridine-2,6-dicarboxylate N-succinyltransferase (273 aa).

Substrate-binding residues include Arg-104 and Asp-141.

It belongs to the transferase hexapeptide repeat family. In terms of assembly, homotrimer.

It localises to the cytoplasm. The catalysed reaction is (S)-2,3,4,5-tetrahydrodipicolinate + succinyl-CoA + H2O = (S)-2-succinylamino-6-oxoheptanedioate + CoA. The protein operates within amino-acid biosynthesis; L-lysine biosynthesis via DAP pathway; LL-2,6-diaminopimelate from (S)-tetrahydrodipicolinate (succinylase route): step 1/3. In Acinetobacter baylyi (strain ATCC 33305 / BD413 / ADP1), this protein is 2,3,4,5-tetrahydropyridine-2,6-dicarboxylate N-succinyltransferase.